Consider the following 302-residue polypeptide: Putative 2-dehydro-3-deoxy-D-gluconate aldolase YagE (302 aa).

Residues Ser-49 and Tyr-112 each act as charge relay system in the active site. Residue Tyr-138 is the Proton donor of the active site. The Schiff-base intermediate with substrate role is filled by Lys-167.

This sequence belongs to the DapA family. A dimer of dimers.

Its subcellular location is the cytoplasm. It catalyses the reaction 2-dehydro-3-deoxy-D-gluconate = D-glyceraldehyde + pyruvate. The catalysed reaction is 2-dehydro-3-deoxy-D-arabinonate = glycolaldehyde + pyruvate. In terms of biological role, catalyzes the formation of 2-keto-3-deoxy-gluconate (KDG) from pyruvate and glyceraldehyde. May also function as a 2-dehydro-3-deoxy-D-pentonate aldolase. Overexpression leads to increased growth (over 2 hours) in the presence of the antibiotics norfloxacin, ampicillin and streptomycin. The sequence is that of Putative 2-dehydro-3-deoxy-D-gluconate aldolase YagE (yagE) from Escherichia coli (strain K12).